Reading from the N-terminus, the 479-residue chain is Cyclin-dependent kinase F-1 (479 aa).

The region spanning Y21–L418 is the Protein kinase domain. ATP is bound by residues V27–V35 and K50. Y32 carries the post-translational modification Phosphotyrosine. D146 serves as the catalytic Proton acceptor. Residues S179, S208, and S247 each carry the phosphoserine modification. The disordered stretch occupies residues K187–M221. T290 is subject to Phosphothreonine. The disordered stretch occupies residues P434 to P479. Basic and acidic residues predominate over residues D442–D454. Polar residues predominate over residues K468–P479.

It belongs to the protein kinase superfamily. CMGC Ser/Thr protein kinase family. CDC2/CDKX subfamily. In terms of tissue distribution, highly expressed in suspension cell culture. Expressed at low levels in all plant organs.

The enzyme catalyses L-seryl-[protein] + ATP = O-phospho-L-seryl-[protein] + ADP + H(+). It catalyses the reaction L-threonyl-[protein] + ATP = O-phospho-L-threonyl-[protein] + ADP + H(+). The catalysed reaction is [DNA-directed RNA polymerase] + ATP = phospho-[DNA-directed RNA polymerase] + ADP + H(+). In terms of biological role, CDK-activating kinase that modulates CDKD-2 and CDKD-3 activities by phosphorylation of the T-loop. Activates CDKD-2 C-terminal domain (CTD) kinase activity. Activates CDKA-1 probably by phosphorylation. Possesses a CDK kinase activity independently of association with cyclin CYCH1-1. Phosphorylates the CTD of the large subunit of RNA polymerase II. The protein is Cyclin-dependent kinase F-1 (CDKF-1) of Arabidopsis thaliana (Mouse-ear cress).